A 302-amino-acid polypeptide reads, in one-letter code: Phosphoribosylaminoimidazole-succinocarboxamide synthase (302 aa).

It belongs to the SAICAR synthetase family.

The catalysed reaction is 5-amino-1-(5-phospho-D-ribosyl)imidazole-4-carboxylate + L-aspartate + ATP = (2S)-2-[5-amino-1-(5-phospho-beta-D-ribosyl)imidazole-4-carboxamido]succinate + ADP + phosphate + 2 H(+). Its pathway is purine metabolism; IMP biosynthesis via de novo pathway; 5-amino-1-(5-phospho-D-ribosyl)imidazole-4-carboxamide from 5-amino-1-(5-phospho-D-ribosyl)imidazole-4-carboxylate: step 1/2. In Cupriavidus taiwanensis (strain DSM 17343 / BCRC 17206 / CCUG 44338 / CIP 107171 / LMG 19424 / R1) (Ralstonia taiwanensis (strain LMG 19424)), this protein is Phosphoribosylaminoimidazole-succinocarboxamide synthase.